Here is a 131-residue protein sequence, read N- to C-terminus: Thioredoxin H4-1 (131 aa).

The Thioredoxin domain maps to 3 to 129 (SCVGKERSDE…LEKKVAALAD (127 aa)). Catalysis depends on nucleophile residues Cys55 and Cys58. A disulfide bond links Cys55 and Cys58.

This sequence belongs to the thioredoxin family. Plant H-type subfamily.

Its subcellular location is the cytoplasm. Its function is as follows. Probable thiol-disulfide oxidoreductase that may be involved in the redox regulation of a number of cytosolic enzymes. The protein is Thioredoxin H4-1 of Oryza sativa subsp. japonica (Rice).